The following is a 217-amino-acid chain: Small ribosomal subunit protein uS3 (217 aa).

Residues 38–106 (IRKFVQKELA…QVHINIIEIK (69 aa)) enclose the KH type-2 domain.

The protein belongs to the universal ribosomal protein uS3 family. Part of the 30S ribosomal subunit. Forms a tight complex with proteins S10 and S14.

In terms of biological role, binds the lower part of the 30S subunit head. Binds mRNA in the 70S ribosome, positioning it for translation. This chain is Small ribosomal subunit protein uS3, found in Streptococcus sanguinis (strain SK36).